We begin with the raw amino-acid sequence, 875 residues long: Outer membrane usher protein FocD (875 aa).

An N-terminal signal peptide occupies residues 1-38; sequence MFFGDGGQLLSDKSLTGSAGGGNNRMKFNILPLAFFIG. C852 and C874 form a disulfide bridge.

The protein belongs to the fimbrial export usher family.

The protein resides in the cell outer membrane. Functionally, involved in the export and assembly of the F1C fimbriae subunits across the outer membrane. The sequence is that of Outer membrane usher protein FocD (focD) from Escherichia coli.